Reading from the N-terminus, the 91-residue chain is Large ribosomal subunit protein eL31 (91 aa).

It belongs to the eukaryotic ribosomal protein eL31 family.

The sequence is that of Large ribosomal subunit protein eL31 from Pyrobaculum neutrophilum (strain DSM 2338 / JCM 9278 / NBRC 100436 / V24Sta) (Thermoproteus neutrophilus).